We begin with the raw amino-acid sequence, 376 residues long: Glutamate 5-kinase (376 aa).

Lys-23 contributes to the ATP binding site. Residues Ser-63, Asp-150, and Asn-162 each coordinate substrate. Residues 182-183 and 222-228 contribute to the ATP site; these read SD and TGGMASK. The PUA domain maps to 284 to 358; sequence GGALRIDAGA…GKQTAQLPEG (75 aa).

This sequence belongs to the glutamate 5-kinase family.

Its subcellular location is the cytoplasm. The catalysed reaction is L-glutamate + ATP = L-glutamyl 5-phosphate + ADP. Its pathway is amino-acid biosynthesis; L-proline biosynthesis; L-glutamate 5-semialdehyde from L-glutamate: step 1/2. In terms of biological role, catalyzes the transfer of a phosphate group to glutamate to form L-glutamate 5-phosphate. This is Glutamate 5-kinase from Corynebacterium diphtheriae (strain ATCC 700971 / NCTC 13129 / Biotype gravis).